A 27-amino-acid chain; its full sequence is Protein YkiD (27 aa).

The polypeptide is Protein YkiD (Escherichia coli (strain K12)).